A 297-amino-acid polypeptide reads, in one-letter code: Tyrosine recombinase XerD (297 aa).

Positions 1–86 constitute a Core-binding (CB) domain; sequence MNDLIEDFLH…SLRSFFHYLM (86 aa). The region spanning 107-291 is the Tyr recombinase domain; the sequence is GLPKVLNLDD…TKLRLKDVYK (185 aa). Active-site residues include Arg-147, Lys-171, His-243, Arg-246, and His-269. Tyr-278 (O-(3'-phospho-DNA)-tyrosine intermediate) is an active-site residue.

Belongs to the 'phage' integrase family. XerD subfamily. Forms a cyclic heterotetrameric complex composed of two molecules of XerC and two molecules of XerD.

It localises to the cytoplasm. Site-specific tyrosine recombinase, which acts by catalyzing the cutting and rejoining of the recombining DNA molecules. The XerC-XerD complex is essential to convert dimers of the bacterial chromosome into monomers to permit their segregation at cell division. It also contributes to the segregational stability of plasmids. The protein is Tyrosine recombinase XerD of Listeria monocytogenes serovar 1/2a (strain ATCC BAA-679 / EGD-e).